The sequence spans 550 residues: MPIGNLGNNVNGNHLIPPAPPLPSQTDGAARGGTGHLISSTGALGSRSLFSPLRNSMADSVDSRDIPGLPTNPSRLAAATSETCLLGGFEVLHDKGPLDILNTQIGPSAFRVEVQADGTHAAIGEKNGLEVSVTLSPQEWSSLQSIDTEGKNRFVFTGGRGGSGHPMVTVASDIAEARTKILAKLDPDNHGGRQPKDVDTRSVGVGSASGIDDGVVSETHTSTTNSSVRSDPKFWVSVGAIAAGLAGLAATGIAQALALTPEPDDPTTTDPDQAANAAESATKDQLTQEAFKNPENQKVNIDANGNAIPSGELKDDIVEQIAQQAKEAGEVARQQAVESNAQAQQRYEDQHARRQEELQLSSGIGYGLSSALIVAGGIGAGVTTALHRRNQPAEQTTTTTTHTVVQQQTGGNTPAQGGTDATRAEDASLNRRDSQGSVASTHWSDSSSEVVNPYAEVGGARNSLSAHQPEEHIYDEVAADPGYSVIQNFSGSGPVTGRLIGTPGQGIQSTYALLANSGGLRLGMGGLTSGGESAVSSVNAAPTPGPVRFV.

The span at 1–13 (MPIGNLGNNVNGN) shows a compositional bias: low complexity. Disordered stretches follow at residues 1–38 (MPIG…GHLI) and 185–228 (LDPD…NSSV). The Cytoplasmic portion of the chain corresponds to 1–233 (MPIGNLGNNV…TNSSVRSDPK (233 aa)). Residues 185-200 (LDPDNHGGRQPKDVDT) show a composition bias toward basic and acidic residues. Over residues 218 to 228 (ETHTSTTNSSV) the composition is skewed to polar residues. A helical transmembrane segment spans residues 234–254 (FWVSVGAIAAGLAGLAATGIA). At 255–362 (QALALTPEPD…RRQEELQLSS (108 aa)) the chain is on the extracellular side. 2 disordered regions span residues 260-285 (TPEP…TKDQ) and 332-354 (ARQQ…HARR). Residues 336 to 345 (AVESNAQAQQ) show a composition bias toward polar residues. Residues 363-383 (GIGYGLSSALIVAGGIGAGVT) form a helical membrane-spanning segment. At 384–550 (TALHRRNQPA…APTPGPVRFV (167 aa)) the chain is on the cytoplasmic side. The disordered stretch occupies residues 389–449 (RNQPAEQTTT…STHWSDSSSE (61 aa)). The span at 395–409 (QTTTTTTHTVVQQQT) shows a compositional bias: low complexity. Over residues 422–434 (TRAEDASLNRRDS) the composition is skewed to basic and acidic residues. The segment covering 435-449 (QGSVASTHWSDSSSE) has biased composition (polar residues). An Essential for NCK-independent actin pedestal formation motif is present at residues 452–454 (NPY). Phosphotyrosine occurs at positions 454 and 474.

It belongs to the Tir receptor family. As to quaternary structure, interacts with intimin. Interacts with host proteins NCK1, NCK2, alpha-actinin and BAIAP2. Post-translationally, phosphorylated on Tyr-474 by host kinases. Tyr-454 can also be phosphorylated, although at lower efficiency. Phosphorylation is stimulated by clustering of Tir by intimin.

The protein localises to the secreted. Its subcellular location is the host cell membrane. Its function is as follows. Multifunctional protein that is required for efficient pedestal formation in host epithelial cells during infection. The extracellular region acts as a receptor for bacterial intimin, allowing the bacterium to attach tightly to the host-cell surface. Simultaneously, the intracellular region initiates a signaling cascade in the host cell, which leads to actin polymerization and formation of actin pedestals at the sites of bacterial adhesion. In strain E2348/69, acts mainly via the host adaptor proteins NCK1 and NCK2. Once clustered and phosphorylated at Tyr-474, Tir binds to NCK proteins, which in turn bind and activate host WASL/N-WASP, leading to actin polymerization. Can also trigger an inefficient, NCK-independent pedestal formation. This pathway involves phosphorylation of Tyr-454 and probably a putative host adaptor. Also acts via direct binding to the host cytoskeletal protein alpha-actinin in a NCK- and phosphotyrosine-independent manner. This interaction may stabilize the pedestal, but is not essential for its formation. The protein is Translocated intimin receptor Tir (tir) of Escherichia coli O127:H6 (strain E2348/69 / EPEC).